The primary structure comprises 271 residues: MATH domain and coiled-coil domain-containing protein At3g27040 (271 aa).

An MATH domain is found at 7 to 133 (DKKFTWVIKN…NGEVKIVAEV (127 aa)). The stretch at 230-271 (KLDWLEKKLKETGKSRLQEIEEDLKDLKVKCADMDALLDFLR) forms a coiled coil.

The sequence is that of MATH domain and coiled-coil domain-containing protein At3g27040 from Arabidopsis thaliana (Mouse-ear cress).